Reading from the N-terminus, the 492-residue chain is Steroid 21-hydroxylase (492 aa).

2 residues coordinate heme b: R91 and K120. R231 provides a ligand contact to 17alpha-hydroxyprogesterone. Residue R231 participates in progesterone binding. Residues H363, R424, and C426 each contribute to the heme b site.

This sequence belongs to the cytochrome P450 family. Heme b is required as a cofactor.

The protein resides in the endoplasmic reticulum membrane. Its subcellular location is the microsome membrane. The catalysed reaction is 17alpha-hydroxyprogesterone + reduced [NADPH--hemoprotein reductase] + O2 = 11-deoxycortisol + oxidized [NADPH--hemoprotein reductase] + H2O + H(+). It catalyses the reaction progesterone + reduced [NADPH--hemoprotein reductase] + O2 = 21-hydroxyprogesterone + oxidized [NADPH--hemoprotein reductase] + H2O + H(+). In terms of biological role, specifically catalyzes the 21-hydroxylation of steroids. Required for the adrenal synthesis of mineralocorticoids and glucocorticoids. This chain is Steroid 21-hydroxylase (CYP21), found in Canis lupus familiaris (Dog).